The following is a 154-amino-acid chain: 6,7-dimethyl-8-ribityllumazine synthase (154 aa).

5-amino-6-(D-ribitylamino)uracil is bound by residues F22, 56–58, and 80–82; these read SFE and AVI. Position 85–86 (85–86) interacts with (2S)-2-hydroxy-3-oxobutyl phosphate; the sequence is ST. H88 serves as the catalytic Proton donor. Y113 lines the 5-amino-6-(D-ribitylamino)uracil pocket. A (2S)-2-hydroxy-3-oxobutyl phosphate-binding site is contributed by R127.

The protein belongs to the DMRL synthase family. In terms of assembly, forms an icosahedral capsid composed of 60 subunits, arranged as a dodecamer of pentamers.

It catalyses the reaction (2S)-2-hydroxy-3-oxobutyl phosphate + 5-amino-6-(D-ribitylamino)uracil = 6,7-dimethyl-8-(1-D-ribityl)lumazine + phosphate + 2 H2O + H(+). It participates in cofactor biosynthesis; riboflavin biosynthesis; riboflavin from 2-hydroxy-3-oxobutyl phosphate and 5-amino-6-(D-ribitylamino)uracil: step 1/2. Its function is as follows. Catalyzes the formation of 6,7-dimethyl-8-ribityllumazine by condensation of 5-amino-6-(D-ribitylamino)uracil with 3,4-dihydroxy-2-butanone 4-phosphate. This is the penultimate step in the biosynthesis of riboflavin. This chain is 6,7-dimethyl-8-ribityllumazine synthase, found in Sulfurihydrogenibium sp. (strain YO3AOP1).